We begin with the raw amino-acid sequence, 302 residues long: uncharacterized protein (302 aa).

Transmembrane regions (helical) follow at residues 25–45, 58–78, 104–124, 158–178, 182–202, 215–235, and 247–267; these read SFIFSVYIIIGLIISYLLQIF, FSYLILGYIGVLNAFSNVIAL, IQVGSQVLIMGCVLMAFWMFL, YGLLGVFTWGLFIICLSATVL, FAWAAFLGFSASFCAVVQYVP, ALSIPMMMMQTPGGFLIGYLL, and MMYIVSACLQGLLLMLCMFYL. The 71-residue stretch at 175–245 folds into the PQ-loop domain; that stretch reads ATVLSSNFAW…SRLPGTNWTT (71 aa).

Its subcellular location is the membrane. This is an uncharacterized protein from Schizosaccharomyces pombe (strain 972 / ATCC 24843) (Fission yeast).